We begin with the raw amino-acid sequence, 338 residues long: MENLDALVSQALEAVQSAEDINALEQIRVHYLGKKGELTQVMKTLGNLPAEERPQVGALINVAKERVTEVLNARKASFEQAELTARLAAECIDVTLPGRGQTSGGLHPITRTLERIEQFFTHIGYGIAEGPEVEDDYHNFEALNIPGHHPARSMHDTFYFNANMLLRTHTSPVQVRTMESQQPPIRIVCPGRVYRSDSDITHSPMFHQIEGLLVDRDINFADLKGTIEEFLRVFFEKELAVRFRPSYFPFTEPSAEVDMECVMCSGKGCRVCKQTGWLEVMGCGMVHPNVLRMSGIDPEEFQGFAFGMGVERLAMLRYGVNDLRLFFDNDLRFLAQFR.

A Mg(2+)-binding site is contributed by glutamate 252.

It belongs to the class-II aminoacyl-tRNA synthetase family. Phe-tRNA synthetase alpha subunit type 1 subfamily. As to quaternary structure, tetramer of two alpha and two beta subunits. Requires Mg(2+) as cofactor.

The protein localises to the cytoplasm. The enzyme catalyses tRNA(Phe) + L-phenylalanine + ATP = L-phenylalanyl-tRNA(Phe) + AMP + diphosphate + H(+). This chain is Phenylalanine--tRNA ligase alpha subunit, found in Pseudomonas syringae pv. syringae (strain B728a).